A 71-amino-acid chain; its full sequence is Putative membrane protein insertion efficiency factor (71 aa).

The protein belongs to the UPF0161 family.

It localises to the cell membrane. Its function is as follows. Could be involved in insertion of integral membrane proteins into the membrane. This Acetivibrio thermocellus (strain ATCC 27405 / DSM 1237 / JCM 9322 / NBRC 103400 / NCIMB 10682 / NRRL B-4536 / VPI 7372) (Clostridium thermocellum) protein is Putative membrane protein insertion efficiency factor.